A 589-amino-acid polypeptide reads, in one-letter code: uncharacterized protein (589 aa).

The RRM domain occupies 242–314; it reads TALEVRNIPE…RFIKIFWYNP (73 aa). Disordered stretches follow at residues 322–348, 443–465, and 566–589; these read PKKF…VDPA, ESPA…RGTN, and TSME…GRWR. A Phosphoserine modification is found at serine 330. Residues 330-340 are compositionally biased toward low complexity; that stretch reads SPTTSDSSNVE. Residue threonine 332 is modified to Phosphothreonine. Serine 334 carries the phosphoserine modification. The segment covering 566–579 has biased composition (polar residues); that stretch reads TSMETGESNTSDNM.

It localises to the nucleus. This is an uncharacterized protein from Schizosaccharomyces pombe (strain 972 / ATCC 24843) (Fission yeast).